The following is a 344-amino-acid chain: Acireductone dioxygenase (344 aa).

Positions 92, 94, 98, and 137 each coordinate Fe(2+). The Ni(2+) site is built by histidine 92, histidine 94, glutamate 98, and histidine 137.

This sequence belongs to the acireductone dioxygenase (ARD) family. Requires Fe(2+) as cofactor. It depends on Ni(2+) as a cofactor.

The protein localises to the cytoplasm. Its subcellular location is the nucleus. The catalysed reaction is 1,2-dihydroxy-5-(methylsulfanyl)pent-1-en-3-one + O2 = 4-methylsulfanyl-2-oxobutanoate + formate + 2 H(+). It catalyses the reaction 1,2-dihydroxy-5-(methylsulfanyl)pent-1-en-3-one + O2 = 3-(methylsulfanyl)propanoate + CO + formate + 2 H(+). The protein operates within amino-acid biosynthesis; L-methionine biosynthesis via salvage pathway; L-methionine from S-methyl-5-thio-alpha-D-ribose 1-phosphate: step 5/6. Catalyzes 2 different reactions between oxygen and the acireductone 1,2-dihydroxy-3-keto-5-methylthiopentene (DHK-MTPene) depending upon the metal bound in the active site. Fe-containing acireductone dioxygenase (Fe-ARD) produces formate and 2-keto-4-methylthiobutyrate (KMTB), the alpha-ketoacid precursor of methionine in the methionine recycle pathway. Ni-containing acireductone dioxygenase (Ni-ARD) produces methylthiopropionate, carbon monoxide and formate, and does not lie on the methionine recycle pathway. This Leishmania braziliensis protein is Acireductone dioxygenase.